We begin with the raw amino-acid sequence, 76 residues long: Secreted RxLR effector protein 31 (76 aa).

The first 24 residues, 1 to 24 (MRHCACLFHLFLIGFLCNVYFSAC), serve as a signal peptide directing secretion. Residues 49-64 (RILRANDSEFLLTEER) carry the RxLR-dEER motif. Asn54 carries an N-linked (GlcNAc...) asparagine glycan.

The protein belongs to the RxLR effector family.

It is found in the secreted. The protein localises to the host nucleus. Its subcellular location is the host cytoplasm. Functionally, secreted effector that dos not suppress the host cell death induced by cell death-inducing proteins. The protein is Secreted RxLR effector protein 31 of Plasmopara viticola (Downy mildew of grapevine).